We begin with the raw amino-acid sequence, 988 residues long: Protein argonaute 10 (988 aa).

Over residues 1 to 11 (MPIRQMKDSSE) the composition is skewed to basic and acidic residues. The tract at residues 1–103 (MPIRQMKDSS…PPSQTTSSAV (103 aa)) is disordered. The span at 41–57 (PVTVTTPATVTQSQASS) shows a compositional bias: low complexity. Residues 64 to 73 (NRSRRRNRGG) are compositionally biased toward basic residues. The region spanning 338–451 (PVIEFVAQLL…LPMEACKIVE (114 aa)) is the PAZ domain. The Piwi domain maps to 625-946 (LLLAILPDNN…AAFRARFYLE (322 aa)).

It belongs to the argonaute family. Ago subfamily. As to quaternary structure, interacts with GATA18/HAN and KNAT1/BP. Interacts with RICE1 and RICE2 that act as cofactors. In terms of tissue distribution, expressed in roots, stems, leaves, developing embryo, siliques, inflorescences, provascular tissue, shoot apical meristem (SAM) and adaxial (upper) sides of lateral organ primordia. Observed in the floral meristem, the adaxial side of sepal primordia, and the provascular tissue.

Its subcellular location is the cytoplasm. Its function is as follows. Involved in RNA-mediated post-transcriptional gene silencing (PTGS). Main component of the RNA-induced silencing complex (RISC) that binds to a short guide RNA such as a microRNA (miRNA) or small interfering RNA (siRNA). RISC uses the mature miRNA or siRNA as a guide for slicer-directed cleavage of homologous mRNAs to repress gene expression. Required for reliable formation of primary and axillary shoot apical meristems. Specifies leaf adaxial identity by repressing the miR165 and miR166 microRNAs in the embryonic shoot apex, in the shoot apical meristem (SAM) and leaf. Represses the microRNA miR398 which targets CCS1 chaperone mRNAs for translational inhibition. Acts as a negative regulator of AGO1 protein level. Like AGO1, is required for stem cell function and organ polarity. Unlike AGO1, is not subjected to small RNA-mediated repression itself. Essential for multiple processes in development. Coregulates, with GATA18/HAN, the shoot apical meristem (SAM) organization. The polypeptide is Protein argonaute 10 (Arabidopsis thaliana (Mouse-ear cress)).